The primary structure comprises 611 residues: CRS2-associated factor 2, chloroplastic (611 aa).

Residues 1–58 (MPPPPPQRPASSHVGRANLFSASPPPLSNRRYPHHRSLPLPPVSPRRRDPKKHSQQPS) constitute a chloroplast transit peptide. The interval 1–72 (MPPPPPQRPA…TDSGPTRTVT (72 aa)) is disordered. A compositionally biased stretch (polar residues) spans 55–72 (QQPSQEEPTDSGPTRTVT). CRM domains lie at 232 to 328 (EPLT…TRPR) and 350 to 446 (DGFT…YSKP). The interval 486–509 (KMFKLWKSAVDSSLALLLDDAEAN) is CRS2 binding. Residues 554–578 (MNDEPETSVAGNEEGQLEQSPDLRD) form a disordered region.

As to quaternary structure, interacts with CRS2 and RNA. Part of large ribonucleo-protein complexes that include group IIB introns, CRS2 and CAF2.

The protein localises to the plastid. The protein resides in the chloroplast stroma. Required for the splicing of group IIB introns in chloroplasts. Forms splicing particles with CRS2. Interacts with RNA and confers intron specificity of the splicing particles. In Zea mays (Maize), this protein is CRS2-associated factor 2, chloroplastic (CAF2).